Here is a 171-residue protein sequence, read N- to C-terminus: Transcription antitermination protein NusB (171 aa).

It belongs to the NusB family.

Involved in transcription antitermination. Required for transcription of ribosomal RNA (rRNA) genes. Binds specifically to the boxA antiterminator sequence of the ribosomal RNA (rrn) operons. The polypeptide is Transcription antitermination protein NusB (Brucella melitensis biotype 1 (strain ATCC 23456 / CCUG 17765 / NCTC 10094 / 16M)).